A 319-amino-acid chain; its full sequence is Acetyl-coenzyme A carboxylase carboxyl transferase subunit alpha (319 aa).

The CoA carboxyltransferase C-terminal domain occupies 39–293; it reads RLQKKSNDLT…KAVLEKQLHE (255 aa).

Belongs to the AccA family. In terms of assembly, acetyl-CoA carboxylase is a heterohexamer composed of biotin carboxyl carrier protein (AccB), biotin carboxylase (AccC) and two subunits each of ACCase subunit alpha (AccA) and ACCase subunit beta (AccD).

It localises to the cytoplasm. It catalyses the reaction N(6)-carboxybiotinyl-L-lysyl-[protein] + acetyl-CoA = N(6)-biotinyl-L-lysyl-[protein] + malonyl-CoA. It functions in the pathway lipid metabolism; malonyl-CoA biosynthesis; malonyl-CoA from acetyl-CoA: step 1/1. In terms of biological role, component of the acetyl coenzyme A carboxylase (ACC) complex. First, biotin carboxylase catalyzes the carboxylation of biotin on its carrier protein (BCCP) and then the CO(2) group is transferred by the carboxyltransferase to acetyl-CoA to form malonyl-CoA. The sequence is that of Acetyl-coenzyme A carboxylase carboxyl transferase subunit alpha from Neisseria meningitidis serogroup B (strain ATCC BAA-335 / MC58).